A 470-amino-acid chain; its full sequence is uncharacterized protein (470 aa).

A disordered region spans residues 439–470 (SIKSSKSKKQLKSSKSKKPIKHTKTKNIYVET). Residues 443–463 (SKSKKQLKSSKSKKPIKHTKT) show a composition bias toward basic residues.

This is an uncharacterized protein from Acanthamoeba polyphaga mimivirus (APMV).